Here is a 975-residue protein sequence, read N- to C-terminus: Chromosome transmission fidelity protein 18 homolog (975 aa).

Disordered regions lie at residues 30–83 (EGAS…KRQV) and 114–141 (SEEM…DLAE). T51 carries the post-translational modification Phosphothreonine. Positions 58 to 77 (RGDAASSPAPAASVGSSQGG) are enriched in low complexity. S64 bears the Phosphoserine mark. Pro residues predominate over residues 122-136 (PPDSSPTDITPPPSP). Phosphoserine is present on S225. 2 disordered regions span residues 246–276 (SDTL…GQDA) and 320–346 (RPSR…KWKS). Residue 374–381 (GPPGLGKT) participates in ATP binding. The tract at residues 858-896 (ASARVENSPQVDGSPPGLEGLLGGIGEKGVHRPAPRNHE) is disordered. Residue S871 is modified to Phosphoserine.

This sequence belongs to the activator 1 small subunits family. CTF18 subfamily. In terms of assembly, component of the CTF18-RFC complex, which consists of CTF18, CTF8, DCC1, RFC2, RFC3, RFC4 and RFC5. During assembly of the CTF18-RFC complex, CTF18 may first assemble into a subcomplex with RFC2, RFC3, RFC4 and RFC5. CTF18 then interacts directly with CTF8, which in turn interacts with DCC1. The CTF18-RFC complex associates with PCNA and with DNA polymerase POLH. The CTF18-RFC complex does not interact with the Rad9/Rad1/Hus1 complex. CTF18 interacts with SMC1A and RAD21. Interacts with DDX11.

The protein resides in the nucleus. Its function is as follows. Chromosome cohesion factor involved in sister chromatid cohesion and fidelity of chromosome transmission. Component of one of the cell nuclear antigen loader complexes, CTF18-replication factor C (CTF18-RFC), which consists of CTF18, CTF8, DCC1, RFC2, RFC3, RFC4 and RFC5. The CTF18-RFC complex binds to single-stranded and primed DNAs and has weak ATPase activity that is stimulated by the presence of primed DNA, replication protein A (RPA) and by proliferating cell nuclear antigen (PCNA). The CTF18-RFC complex catalyzes the ATP-dependent loading of PCNA onto primed and gapped DNA. Interacts with and stimulates DNA polymerase POLH. During DNA repair synthesis, involved in loading DNA polymerase POLE at the sites of local damage. The protein is Chromosome transmission fidelity protein 18 homolog (CHTF18) of Homo sapiens (Human).